The primary structure comprises 396 residues: NADH-quinone oxidoreductase subunit D (396 aa).

This sequence belongs to the complex I 49 kDa subunit family. NDH-1 is composed of 14 different subunits. Subunits NuoB, C, D, E, F, and G constitute the peripheral sector of the complex.

Its subcellular location is the cell inner membrane. The enzyme catalyses a quinone + NADH + 5 H(+)(in) = a quinol + NAD(+) + 4 H(+)(out). NDH-1 shuttles electrons from NADH, via FMN and iron-sulfur (Fe-S) centers, to quinones in the respiratory chain. The immediate electron acceptor for the enzyme in this species is believed to be ubiquinone. Couples the redox reaction to proton translocation (for every two electrons transferred, four hydrogen ions are translocated across the cytoplasmic membrane), and thus conserves the redox energy in a proton gradient. The chain is NADH-quinone oxidoreductase subunit D from Methylobacterium sp. (strain 4-46).